Consider the following 320-residue polypeptide: Glutaminyl-peptide cyclotransferase (320 aa).

The span at 1 to 12 shows a compositional bias: basic residues; sequence MATRSPYKRQTK. A disordered region spans residues 1 to 22; the sequence is MATRSPYKRQTKRSMIQSLPAS. Topologically, residues 1 to 36 are cytoplasmic; it reads MATRSPYKRQTKRSMIQSLPASSSASSRRRFISRKR. The chain crosses the membrane as a helical; Signal-anchor for type II membrane protein span at residues 37-57; the sequence is FAMMIPLALLSGAVFLFFMPF. Topologically, residues 58–320 are lumenal; sequence NSWGQSSGSS…GNYIEQQCLV (263 aa). 2 N-linked (GlcNAc...) asparagine glycosylation sites follow: Asn-99 and Asn-163.

Belongs to the plant glutaminyl-peptide cyclotransferase family. Glycosylated.

The protein resides in the endoplasmic reticulum membrane. The catalysed reaction is N-terminal L-glutaminyl-[peptide] = N-terminal 5-oxo-L-prolyl-[peptide] + NH4(+). Functionally, converts glutamine and N-terminal glutamyl residues in peptides to 5-oxoproline and 5-oxoproline residues. Not involved in the major pathway for 5-oxoproline production. This chain is Glutaminyl-peptide cyclotransferase (QCT), found in Arabidopsis thaliana (Mouse-ear cress).